The primary structure comprises 284 residues: NAD kinase (284 aa).

The Proton acceptor role is filled by aspartate 60. NAD(+) contacts are provided by residues 60 to 61, 134 to 135, arginine 145, lysine 162, aspartate 164, 175 to 180, and glutamine 234; these read DG, NE, and TAYSFS.

The protein belongs to the NAD kinase family. A divalent metal cation is required as a cofactor.

It localises to the cytoplasm. The catalysed reaction is NAD(+) + ATP = ADP + NADP(+) + H(+). In terms of biological role, involved in the regulation of the intracellular balance of NAD and NADP, and is a key enzyme in the biosynthesis of NADP. Catalyzes specifically the phosphorylation on 2'-hydroxyl of the adenosine moiety of NAD to yield NADP. The chain is NAD kinase from Clostridium botulinum (strain Eklund 17B / Type B).